Here is a 383-residue protein sequence, read N- to C-terminus: Proton extrusion protein PxcA (383 aa).

4 consecutive transmembrane segments (helical) span residues 163–183, 258–278, 306–326, and 341–361; these read ILLLLILVPLLIQQVAGAYII, AVKNVFSDLSALIAFTVVCFA, IILFTDIFVGFHSPEGWTVLL, and FVMLFIATFPVILATIFKYWI.

It belongs to the CemA family.

The protein localises to the cell inner membrane. Required for H(+) efflux immediately after light irradiation to form a rapid H(+) concentration gradient across the thylakoid membranes. Together with PxcL, contributes to transient H(+) uptake following dark to light transition. The chain is Proton extrusion protein PxcA from Synechococcus sp. (strain CC9902).